We begin with the raw amino-acid sequence, 924 residues long: Intercellular adhesion molecule 5 (924 aa).

The N-terminal stretch at 1–31 is a signal peptide; it reads MPGPSPGLRRALLGLWAALGLGLFGLSAVSQ. Over 32 to 835 the chain is Extracellular; the sequence is EPFWADLQPR…RITVRVAGPW (804 aa). Ig-like C2-type domains are found at residues 48 to 130, 135 to 235, 242 to 329, 337 to 402, 408 to 486, 491 to 568, 573 to 662, 666 to 739, and 746 to 830; these read GGSL…PLPP, GENF…RLAA, GSER…LLTL, GQMV…SAEL, PRLD…VTLT, PALD…VAVT, PRFE…VVSA, PEMD…RTVT, and PVVA…ITVR. A glycan (N-linked (GlcNAc...) (high mannose) asparagine) is linked at Asn-54. 2 disulfide bridges follow: Cys-55/Cys-99 and Cys-59/Cys-103. N-linked (GlcNAc...) asparagine glycosylation is found at Asn-74 and Asn-137. A disulfide bridge links Cys-142 with Cys-198. Thr-182 and Thr-184 each carry phosphothreonine. 2 N-linked (GlcNAc...) asparagine glycosylation sites follow: Asn-195 and Asn-214. Cysteines 249 and 302 form a disulfide. Residues Asn-303, Asn-316, Asn-371, and Asn-397 are each glycosylated (N-linked (GlcNAc...) asparagine). A disulfide bond links Cys-344 and Cys-383. Disulfide bonds link Cys-415–Cys-470, Cys-498–Cys-552, and Cys-580–Cys-645. 2 N-linked (GlcNAc...) asparagine glycosylation sites follow: Asn-583 and Asn-646. Cys-673 and Cys-725 are oxidised to a cystine. Residues Asn-764, Asn-795, and Asn-796 are each glycosylated (N-linked (GlcNAc...) asparagine). A disulfide bond links Cys-769 and Cys-814. Residues 836–856 traverse the membrane as a helical segment; it reads LWVAVGGAAGGAALLAAGAGL. At 857-924 the chain is on the cytoplasmic side; that stretch reads AFYVQSTACK…EVFAIQLTSA (68 aa). Residues 891–903 show a composition bias toward gly residues; that stretch reads AGGAAGAEGGPEA. Residues 891-911 form a disordered region; sequence AGGAAGAEGGPEAAGGAAESP.

This sequence belongs to the immunoglobulin superfamily. ICAM family. In terms of processing, glycosylation at Asn-54 is critical for functional folding. In terms of tissue distribution, expressed on neurons in the most rostral segment of the mammalian brain, the telencephalon.

It is found in the membrane. In terms of biological role, ICAM proteins are ligands for the leukocyte adhesion protein LFA-1 (integrin alpha-L/beta-2). The protein is Intercellular adhesion molecule 5 (ICAM5) of Homo sapiens (Human).